The sequence spans 301 residues: Putative carboxypeptidase slr1534 (301 aa).

The active-site Nucleophile is the S116. Active-site charge relay system residues include E206 and H276.

The protein belongs to the peptidase S66 family.

The chain is Putative carboxypeptidase slr1534 from Synechocystis sp. (strain ATCC 27184 / PCC 6803 / Kazusa).